Reading from the N-terminus, the 195-residue chain is Pyridoxal 5'-phosphate synthase subunit PdxT (195 aa).

46–48 (GES) provides a ligand contact to L-glutamine. The active-site Nucleophile is the Cys78. Residues Arg107 and 136 to 137 (IR) each bind L-glutamine. Catalysis depends on charge relay system residues His173 and Glu175.

Belongs to the glutaminase PdxT/SNO family. In the presence of PdxS, forms a dodecamer of heterodimers. Only shows activity in the heterodimer.

It carries out the reaction aldehydo-D-ribose 5-phosphate + D-glyceraldehyde 3-phosphate + L-glutamine = pyridoxal 5'-phosphate + L-glutamate + phosphate + 3 H2O + H(+). The enzyme catalyses L-glutamine + H2O = L-glutamate + NH4(+). Its pathway is cofactor biosynthesis; pyridoxal 5'-phosphate biosynthesis. Its function is as follows. Catalyzes the hydrolysis of glutamine to glutamate and ammonia as part of the biosynthesis of pyridoxal 5'-phosphate. The resulting ammonia molecule is channeled to the active site of PdxS. In Dehalococcoides mccartyi (strain ATCC BAA-2100 / JCM 16839 / KCTC 5957 / BAV1), this protein is Pyridoxal 5'-phosphate synthase subunit PdxT.